The sequence spans 892 residues: Translation initiation factor IF-2 (892 aa).

Positions 88-306 (KKRTFVKRDP…LQQGFQKPAQ (219 aa)) are disordered. 2 stretches are compositionally biased toward basic and acidic residues: residues 93–159 (VKRD…KDKV) and 166–216 (DMIK…EENK). Residues 254–269 (GRGRNAKAARPAKKGK) are compositionally biased toward basic residues. Residues 270 to 282 (HAESKADREEARA) are compositionally biased toward basic and acidic residues. Positions 391 to 560 (PRAPVVTIMG…LLQAEVLELK (170 aa)) constitute a tr-type G domain. A G1 region spans residues 400–407 (GHVDHGKT). A GTP-binding site is contributed by 400 to 407 (GHVDHGKT). The interval 425–429 (GITQH) is G2. A G3 region spans residues 446–449 (DTPG). GTP contacts are provided by residues 446–450 (DTPGH) and 500–503 (NKID). The segment at 500-503 (NKID) is G4. The interval 536 to 538 (SAK) is G5.

It belongs to the TRAFAC class translation factor GTPase superfamily. Classic translation factor GTPase family. IF-2 subfamily.

The protein localises to the cytoplasm. One of the essential components for the initiation of protein synthesis. Protects formylmethionyl-tRNA from spontaneous hydrolysis and promotes its binding to the 30S ribosomal subunits. Also involved in the hydrolysis of GTP during the formation of the 70S ribosomal complex. This chain is Translation initiation factor IF-2, found in Salmonella schwarzengrund (strain CVM19633).